The primary structure comprises 198 residues: Putative nitroreductase MJ1384 (198 aa).

Belongs to the nitroreductase family. It depends on FMN as a cofactor.

In Methanocaldococcus jannaschii (strain ATCC 43067 / DSM 2661 / JAL-1 / JCM 10045 / NBRC 100440) (Methanococcus jannaschii), this protein is Putative nitroreductase MJ1384.